Consider the following 446-residue polypeptide: Glutamate-1-semialdehyde 2,1-aminomutase (446 aa).

N6-(pyridoxal phosphate)lysine is present on Lys264.

This sequence belongs to the class-III pyridoxal-phosphate-dependent aminotransferase family. HemL subfamily. Requires pyridoxal 5'-phosphate as cofactor.

It is found in the cytoplasm. The enzyme catalyses (S)-4-amino-5-oxopentanoate = 5-aminolevulinate. Its pathway is porphyrin-containing compound metabolism; protoporphyrin-IX biosynthesis; 5-aminolevulinate from L-glutamyl-tRNA(Glu): step 2/2. This chain is Glutamate-1-semialdehyde 2,1-aminomutase, found in Natronomonas pharaonis (strain ATCC 35678 / DSM 2160 / CIP 103997 / JCM 8858 / NBRC 14720 / NCIMB 2260 / Gabara) (Halobacterium pharaonis).